The chain runs to 453 residues: Ribosomal protein uS12 methylthiotransferase RimO (453 aa).

The MTTase N-terminal domain maps to 5-120 (PKVGFVSLGC…VMQAVHSHLP (116 aa)). Positions 14, 50, 79, 151, 155, and 158 each coordinate [4Fe-4S] cluster. A Radical SAM core domain is found at 137–382 (LTPRHYAYLK…MEVAEEVSAN (246 aa)). The 69-residue stretch at 385–453 (QRKVGKTLKV…ADGHDLWGEV (69 aa)) folds into the TRAM domain.

The protein belongs to the methylthiotransferase family. RimO subfamily. Requires [4Fe-4S] cluster as cofactor.

It is found in the cytoplasm. The enzyme catalyses L-aspartate(89)-[ribosomal protein uS12]-hydrogen + (sulfur carrier)-SH + AH2 + 2 S-adenosyl-L-methionine = 3-methylsulfanyl-L-aspartate(89)-[ribosomal protein uS12]-hydrogen + (sulfur carrier)-H + 5'-deoxyadenosine + L-methionine + A + S-adenosyl-L-homocysteine + 2 H(+). In terms of biological role, catalyzes the methylthiolation of an aspartic acid residue of ribosomal protein uS12. In Burkholderia lata (strain ATCC 17760 / DSM 23089 / LMG 22485 / NCIMB 9086 / R18194 / 383), this protein is Ribosomal protein uS12 methylthiotransferase RimO.